Consider the following 256-residue polypeptide: MSSVFGSVHILAMIAIQLLLTHSVSSLNLTNAYLHHKCSNTQGKYKQGSAFEKNLNLVLSTITSIGNFRDGFRYTEEGEDPNNVFVMFQCRGDSYWSKCPPCISTAVSGLRRRCPRNKGAIIWYDQCLLKISSVASFNKIDYENDFYLSNPNNMSDRGLFNKETSALLEKLAYKASDRNNLDGKQLVLYAAGEKRIGTKKVYAMVQCTKDLIFTKCFECLEGILRKFPQCCDGKRGGRVFGTSCNFRYELYPFLRN.

An N-terminal signal peptide occupies residues 1 to 26; sequence MSSVFGSVHILAMIAIQLLLTHSVSS. 2 Gnk2-homologous domains span residues 33–136 and 142–253; these read YLHH…SVAS and YEND…LYPF.

The protein belongs to the cysteine-rich repeat secretory protein family.

The protein localises to the secreted. This is Cysteine-rich repeat secretory protein 42 (CRRSP42) from Arabidopsis thaliana (Mouse-ear cress).